A 260-amino-acid chain; its full sequence is Hydroxyacylglutathione hydrolase (260 aa).

Positions 55, 57, 59, 60, 116, 133, and 171 each coordinate Zn(2+).

This sequence belongs to the metallo-beta-lactamase superfamily. Glyoxalase II family. In terms of assembly, monomer. Zn(2+) serves as cofactor.

It carries out the reaction an S-(2-hydroxyacyl)glutathione + H2O = a 2-hydroxy carboxylate + glutathione + H(+). It participates in secondary metabolite metabolism; methylglyoxal degradation; (R)-lactate from methylglyoxal: step 2/2. Thiolesterase that catalyzes the hydrolysis of S-D-lactoyl-glutathione to form glutathione and D-lactic acid. In Shewanella loihica (strain ATCC BAA-1088 / PV-4), this protein is Hydroxyacylglutathione hydrolase.